We begin with the raw amino-acid sequence, 124 residues long: Putative membrane protein insertion efficiency factor (124 aa).

This sequence belongs to the UPF0161 family.

The protein resides in the cell inner membrane. Its function is as follows. Could be involved in insertion of integral membrane proteins into the membrane. In Psychrobacter cryohalolentis (strain ATCC BAA-1226 / DSM 17306 / VKM B-2378 / K5), this protein is Putative membrane protein insertion efficiency factor.